The chain runs to 382 residues: Protein MGF 360-4L (382 aa).

This sequence belongs to the asfivirus MGF 360 family.

Its function is as follows. Plays a role in virus cell tropism, and may be required for efficient virus replication in macrophages. The protein is Protein MGF 360-4L of Ornithodoros (relapsing fever ticks).